Consider the following 155-residue polypeptide: Small ribosomal subunit protein uS7 (155 aa).

This sequence belongs to the universal ribosomal protein uS7 family. Part of the 30S ribosomal subunit. Contacts proteins S9 and S11.

Functionally, one of the primary rRNA binding proteins, it binds directly to 16S rRNA where it nucleates assembly of the head domain of the 30S subunit. Is located at the subunit interface close to the decoding center, probably blocks exit of the E-site tRNA. The sequence is that of Small ribosomal subunit protein uS7 from Xanthomonas oryzae pv. oryzae (strain MAFF 311018).